A 265-amino-acid polypeptide reads, in one-letter code: MSDIIIAFILGIVEGLAEFLPISSTGHLILVGHLLGFEGERAKTFEIVIQLGAILAIAILYHKRLVSLCNIKPLLRKEKKFNAFHVFLGVFPAVVAGLLLHDVIKTYLFQPYTVVIGLVAGAILMILAEVKKQEATACSLDDLTYRQALTIGFFQCLAVYPGFSRAGSTISGGLLAKVNYKTASEFSFLIALPVMVGATSLDLLKSWKYLSVDDIPMFAVGFITSFIVAMLAVVTFLKLLEKIGLKPFAYYRILLAILFTLFVLL.

7 consecutive transmembrane segments (helical) span residues 4 to 24 (IIIA…PISS), 42 to 62 (AKTF…ILYH), 84 to 104 (FHVF…HDVI), 108 to 128 (LFQP…MILA), 184 to 204 (SEFS…LDLL), 217 to 237 (MFAV…VTFL), and 245 to 265 (LKPF…FVLL).

Belongs to the UppP family.

It localises to the cell membrane. The catalysed reaction is di-trans,octa-cis-undecaprenyl diphosphate + H2O = di-trans,octa-cis-undecaprenyl phosphate + phosphate + H(+). Its function is as follows. Catalyzes the dephosphorylation of undecaprenyl diphosphate (UPP). Confers resistance to bacitracin. The protein is Undecaprenyl-diphosphatase 1 of Bacillus cereus (strain ZK / E33L).